A 754-amino-acid chain; its full sequence is Gelsolin, cytoplasmic (754 aa).

Positions 1–120 (MVPAFEGAGA…RYLKGGVASG (120 aa)) are actin-severing. The stretch at 22–71 (FEVVPYPKEKYGQFYQGDSYIVLYTRDVNGNLSWDLHFWLGSETSQDEAG) is one Gelsolin-like 1 repeat. Positions 68–71 (DEAG) are actin-actin interfilament contact point. A 1,2-diacyl-sn-glycero-3-phospho-(1D-myo-inositol-4,5-bisphosphate) is bound by residues 101–108 (LFLSRFKK) and 133–141 (RLFHVKGRR). The stretch at 143–183 (IRIRQVEVGVGSMNKGDCFILDCGSQVYAYMGPSSRKMDRL) is one Gelsolin-like 2 repeat. The interval 209–238 (TASGSEAGESSPGLGGGSPDDVADEDTGVD) is disordered. Residues 210 to 220 (ASGSEAGESSP) are compositionally biased toward low complexity. Gelsolin-like repeat units lie at residues 266 to 306 (NMIG…KEKV), 414 to 463 (LKLE…DEKA), 538 to 580 (FDTR…EEKA), and 643 to 684 (LRVN…QEKE). The tract at residues 386–751 (LLQKNAGPAF…MKAQVPETNA (366 aa)) is actin-binding, Ca-sensitive. Ca(2+) is bound by residues Gly430, Asp431, Glu461, Asp556, Glu578, Asp659, Asp660, and Glu682.

Belongs to the villin/gelsolin family. In terms of tissue distribution, tail muscle.

The protein resides in the cytoplasm. Its subcellular location is the cytoskeleton. Its function is as follows. Calcium-regulated, actin-modulating protein that binds to the plus (or barbed) ends of actin monomers or filaments, preventing monomer exchange (end-blocking or capping). It can promote the assembly of monomers into filaments (nucleation) as well as sever filaments already formed. This chain is Gelsolin, cytoplasmic, found in Homarus americanus (American lobster).